Reading from the N-terminus, the 51-residue chain is Large ribosomal subunit protein bL33 (51 aa).

It belongs to the bacterial ribosomal protein bL33 family.

This is Large ribosomal subunit protein bL33 from Vesicomyosocius okutanii subsp. Calyptogena okutanii (strain HA).